Consider the following 352-residue polypeptide: Large ribosomal subunit protein uL10 (352 aa).

The span at 286 to 297 (DDEDALPEELQD) shows a compositional bias: acidic residues. The interval 286-352 (DDEDALPEEL…GAEGLGEMFG (67 aa)) is disordered. Positions 299 to 310 (DAPAAPAGGEAD) are enriched in low complexity. Residues 324–340 (EADDADDSDDDDDDDDG) show a composition bias toward acidic residues. A compositionally biased stretch (gly residues) spans 343 to 352 (GAEGLGEMFG).

The protein belongs to the universal ribosomal protein uL10 family. Part of the 50S ribosomal subunit. Forms part of the ribosomal stalk which helps the ribosome interact with GTP-bound translation factors. Forms a heptameric L10(L12)2(L12)2(L12)2 complex, where L10 forms an elongated spine to which the L12 dimers bind in a sequential fashion.

In terms of biological role, forms part of the ribosomal stalk, playing a central role in the interaction of the ribosome with GTP-bound translation factors. This chain is Large ribosomal subunit protein uL10, found in Halobacterium salinarum (strain ATCC 700922 / JCM 11081 / NRC-1) (Halobacterium halobium).